The primary structure comprises 587 residues: Glucosylglycerate phosphorylase (587 aa).

Aspartate 236 serves as the catalytic Nucleophile.

Belongs to the glycosyl hydrolase 13 family. Glucosylglycerate phosphorylase subfamily.

It carries out the reaction (2R)-2-O-(alpha-D-glucopyranosyl)-glycerate + phosphate = (R)-glycerate + alpha-D-glucose 1-phosphate. In terms of biological role, catalyzes the reversible phosphorolysis of glucosylglycerate into alpha-D-glucose 1-phosphate (Glc1P) and D-glycerate. May be a regulator of intracellular levels of glucosylglycerate, a compatible solute that primarily protects organisms facing salt stress and very specific nutritional constraints. Cannot catalyze the phosphorolysis of sucrose. The sequence is that of Glucosylglycerate phosphorylase from Spirochaeta thermophila (strain ATCC 700085 / DSM 6578 / Z-1203).